The primary structure comprises 252 residues: Demethylmenaquinone methyltransferase (252 aa).

S-adenosyl-L-methionine-binding positions include Thr64, Asp85, and 112-113 (NA).

It belongs to the class I-like SAM-binding methyltransferase superfamily. MenG/UbiE family.

It carries out the reaction a 2-demethylmenaquinol + S-adenosyl-L-methionine = a menaquinol + S-adenosyl-L-homocysteine + H(+). It participates in quinol/quinone metabolism; menaquinone biosynthesis; menaquinol from 1,4-dihydroxy-2-naphthoate: step 2/2. Functionally, methyltransferase required for the conversion of demethylmenaquinol (DMKH2) to menaquinol (MKH2). The sequence is that of Demethylmenaquinone methyltransferase from Lactococcus lactis subsp. lactis (strain IL1403) (Streptococcus lactis).